The following is a 617-amino-acid chain: Probable Xaa-Pro aminopeptidase P (617 aa).

Mn(2+) is bound by residues aspartate 414, aspartate 425, glutamate 523, and glutamate 537.

This sequence belongs to the peptidase M24B family. It depends on Mn(2+) as a cofactor.

It catalyses the reaction Release of any N-terminal amino acid, including proline, that is linked to proline, even from a dipeptide or tripeptide.. In terms of biological role, catalyzes the removal of a penultimate prolyl residue from the N-termini of peptides. The polypeptide is Probable Xaa-Pro aminopeptidase P (AMPP) (Ajellomyces capsulatus (strain G186AR / H82 / ATCC MYA-2454 / RMSCC 2432) (Darling's disease fungus)).